The primary structure comprises 527 residues: Putative WEB family protein At4g17210 (527 aa).

2 disordered regions span residues 1 to 28 (MAKIRTDAPVMPPETPPRSSEVGEIDTR) and 46 to 70 (FSKKQPPRLSSSSSSQSQDTTTDVS). Over residues 55–68 (SSSSSSQSQDTTTD) the composition is skewed to low complexity. Coiled coils occupy residues 95-159 (AAKA…YILI), 202-389 (SNKI…AKHM), and 436-513 (KKIR…EAHS).

The protein belongs to the WEB family.

The sequence is that of Putative WEB family protein At4g17210 from Arabidopsis thaliana (Mouse-ear cress).